A 680-amino-acid chain; its full sequence is DNA-directed RNA polymerase subunit beta' (680 aa).

Positions 69, 71, 87, and 90 each coordinate Zn(2+). 3 residues coordinate Mg(2+): Asp-489, Asp-491, and Asp-493.

It belongs to the RNA polymerase beta' chain family. RpoC1 subfamily. As to quaternary structure, in plastids the minimal PEP RNA polymerase catalytic core is composed of four subunits: alpha, beta, beta', and beta''. When a (nuclear-encoded) sigma factor is associated with the core the holoenzyme is formed, which can initiate transcription. Mg(2+) serves as cofactor. Requires Zn(2+) as cofactor.

The protein localises to the plastid. Its subcellular location is the chloroplast. The catalysed reaction is RNA(n) + a ribonucleoside 5'-triphosphate = RNA(n+1) + diphosphate. Its function is as follows. DNA-dependent RNA polymerase catalyzes the transcription of DNA into RNA using the four ribonucleoside triphosphates as substrates. The polypeptide is DNA-directed RNA polymerase subunit beta' (Arabidopsis thaliana (Mouse-ear cress)).